The chain runs to 234 residues: Endonuclease NucS (234 aa).

This sequence belongs to the NucS endonuclease family.

It localises to the cytoplasm. In terms of biological role, cleaves both 3' and 5' ssDNA extremities of branched DNA structures. This chain is Endonuclease NucS, found in Bifidobacterium animalis subsp. lactis (strain AD011).